Reading from the N-terminus, the 441-residue chain is Proline--tRNA ligase (441 aa).

The protein belongs to the class-II aminoacyl-tRNA synthetase family. ProS type 2 subfamily. As to quaternary structure, homodimer.

It localises to the cytoplasm. It catalyses the reaction tRNA(Pro) + L-proline + ATP = L-prolyl-tRNA(Pro) + AMP + diphosphate. Its function is as follows. Catalyzes the attachment of proline to tRNA(Pro) in a two-step reaction: proline is first activated by ATP to form Pro-AMP and then transferred to the acceptor end of tRNA(Pro). The protein is Proline--tRNA ligase of Bartonella quintana (strain Toulouse) (Rochalimaea quintana).